The chain runs to 367 residues: tRNA-specific 2-thiouridylase MnmA (367 aa).

ATP contacts are provided by residues 24 to 31 (AMSGGVDS) and leucine 50. The Nucleophile role is filled by cysteine 115. Cysteine 115 and cysteine 211 are oxidised to a cystine. Residue glycine 139 participates in ATP binding. Residues 161–163 (KDQ) are interaction with tRNA. The active-site Cysteine persulfide intermediate is the cysteine 211.

This sequence belongs to the MnmA/TRMU family.

Its subcellular location is the cytoplasm. The enzyme catalyses S-sulfanyl-L-cysteinyl-[protein] + uridine(34) in tRNA + AH2 + ATP = 2-thiouridine(34) in tRNA + L-cysteinyl-[protein] + A + AMP + diphosphate + H(+). Catalyzes the 2-thiolation of uridine at the wobble position (U34) of tRNA, leading to the formation of s(2)U34. The chain is tRNA-specific 2-thiouridylase MnmA from Ehrlichia canis (strain Jake).